We begin with the raw amino-acid sequence, 44 residues long: Brevinin-1PLa (44 aa).

The propeptide occupies 1–18 (NAEEERRDEPDETDVEVE). Cys-38 and Cys-44 form a disulfide bridge.

As to expression, expressed by the skin glands.

The protein resides in the secreted. In terms of biological role, antimicrobial peptide. The polypeptide is Brevinin-1PLa (Lithobates palustris (Pickerel frog)).